Reading from the N-terminus, the 485-residue chain is L-ornithine N(5)-oxygenase (485 aa).

Residues 49–57 (ERQQQFVWH) and Gln-68 each bind FAD. Residue Lys-73 participates in L-ornithine binding. Position 134 (Val-134) interacts with FAD. Arg-243 contributes to the NADP(+) binding site. L-ornithine is bound by residues 257-260 (NEIF) and Asn-287. Position 287 to 289 (287 to 289 (NYS)) interacts with NADP(+). Position 425 to 427 (425 to 427 (TLL)) interacts with FAD. Position 428 (Ser-428) interacts with L-ornithine.

This sequence belongs to the lysine N(6)-hydroxylase/L-ornithine N(5)-oxygenase family. As to quaternary structure, homotetramer. FAD is required as a cofactor.

It catalyses the reaction L-ornithine + NADH + O2 = N(5)-hydroxy-L-ornithine + NAD(+) + H2O. It carries out the reaction L-ornithine + NADPH + O2 = N(5)-hydroxy-L-ornithine + NADP(+) + H2O. Its pathway is siderophore biosynthesis. Its function is as follows. L-ornithine N(5)-oxygenase; part of the gene cluster that mediates the biosynthesis of desferriferrichrome that chelates Fe(3+) to form ferrichrome. Fe(3+) is a key factor for induction of trap formation and the fungus uses the iron chelating desferriferrichrome to sequester Fe(3+) to inhibit trap formation and increase nematicidal activity. The biosynthesis of desferriferrichrome requires the action of the L-ornithine N(5)-oxygenase (LOO) Ao414 that hydroxylates L-ornithine at N(5), resulting in the formation of N(5)-hydroxyl-L-ornithine, which is subsequently N-acetylated to yield N(5)-acetyl-N(5)-hydroxy-L-ornithine (L-AHO). L-AHO harbors one hydroxamate moiety, which is the key core responsible for chelating iron. Then, L-AHO is further condensated with glycines to form desferriferrichrome through the NRPS protein Ao415. This Arthrobotrys oligospora (strain ATCC 24927 / CBS 115.81 / DSM 1491) (Nematode-trapping fungus) protein is L-ornithine N(5)-oxygenase.